The primary structure comprises 833 residues: Leucine--tRNA ligase (833 aa).

The 'HIGH' region motif lies at 41–52 (PYPSGAGLHVGH). Residues 610-614 (KMSKS) carry the 'KMSKS' region motif. Lys-613 is an ATP binding site.

This sequence belongs to the class-I aminoacyl-tRNA synthetase family.

It localises to the cytoplasm. It catalyses the reaction tRNA(Leu) + L-leucine + ATP = L-leucyl-tRNA(Leu) + AMP + diphosphate. The chain is Leucine--tRNA ligase from Streptococcus mutans serotype c (strain ATCC 700610 / UA159).